A 226-amino-acid polypeptide reads, in one-letter code: MREPLDPLGPALAQASLYLCTDARRERGDLAEFADAALAGGVDLIQLRDKGSAGERRFGPLEAREELAALEILAEAARRHGALLAVNDRADIALAAGADVLHLGQDDLPLPVARRIIGPSPLIGRSTHDSAQVAAAVAEEVDYFCVGPCWPTPTKPGREAPGLGLVREVASRATEKPWFAIGGIDEARLPEVLDAGARRIVVVRAITAADDPKAAARRLKDALVSR.

4-amino-2-methyl-5-(diphosphooxymethyl)pyrimidine-binding positions include 46 to 50 (QLRDK) and Asn87. Mg(2+) is bound by residues Asp88 and Asp107. A 4-amino-2-methyl-5-(diphosphooxymethyl)pyrimidine-binding site is contributed by Ser126. Residue 152–154 (TPT) participates in 2-[(2R,5Z)-2-carboxy-4-methylthiazol-5(2H)-ylidene]ethyl phosphate binding. Lys155 serves as a coordination point for 4-amino-2-methyl-5-(diphosphooxymethyl)pyrimidine. A 2-[(2R,5Z)-2-carboxy-4-methylthiazol-5(2H)-ylidene]ethyl phosphate-binding site is contributed by Gly183.

It belongs to the thiamine-phosphate synthase family. It depends on Mg(2+) as a cofactor.

It carries out the reaction 2-[(2R,5Z)-2-carboxy-4-methylthiazol-5(2H)-ylidene]ethyl phosphate + 4-amino-2-methyl-5-(diphosphooxymethyl)pyrimidine + 2 H(+) = thiamine phosphate + CO2 + diphosphate. The catalysed reaction is 2-(2-carboxy-4-methylthiazol-5-yl)ethyl phosphate + 4-amino-2-methyl-5-(diphosphooxymethyl)pyrimidine + 2 H(+) = thiamine phosphate + CO2 + diphosphate. The enzyme catalyses 4-methyl-5-(2-phosphooxyethyl)-thiazole + 4-amino-2-methyl-5-(diphosphooxymethyl)pyrimidine + H(+) = thiamine phosphate + diphosphate. It participates in cofactor biosynthesis; thiamine diphosphate biosynthesis; thiamine phosphate from 4-amino-2-methyl-5-diphosphomethylpyrimidine and 4-methyl-5-(2-phosphoethyl)-thiazole: step 1/1. Its function is as follows. Condenses 4-methyl-5-(beta-hydroxyethyl)thiazole monophosphate (THZ-P) and 2-methyl-4-amino-5-hydroxymethyl pyrimidine pyrophosphate (HMP-PP) to form thiamine monophosphate (TMP). This Mycobacterium sp. (strain KMS) protein is Thiamine-phosphate synthase.